Consider the following 157-residue polypeptide: Glycine-rich RNA-binding, abscisic acid-inducible protein (157 aa).

An RRM domain is found at 8–86 (YRCFVGGLAW…RNITVNQAQS (79 aa)). Residues 82 to 157 (NQAQSRGGGG…YGGGGGGWRD (76 aa)) are disordered. Residues 87-157 (RGGGGGGGGY…YGGGGGGWRD (71 aa)) are compositionally biased toward gly residues.

Possibly has a role in RNA transcription or processing during stress. This chain is Glycine-rich RNA-binding, abscisic acid-inducible protein (RAB15), found in Zea mays (Maize).